The following is a 123-amino-acid chain: Large ribosomal subunit protein uL14c (123 aa).

This sequence belongs to the universal ribosomal protein uL14 family. In terms of assembly, part of the 50S ribosomal subunit.

It localises to the plastid. The protein localises to the chloroplast. Binds to 23S rRNA. The sequence is that of Large ribosomal subunit protein uL14c from Oryza nivara (Indian wild rice).